A 152-amino-acid chain; its full sequence is 3-dehydroquinate dehydratase (152 aa).

The Proton acceptor role is filled by tyrosine 23. Substrate-binding residues include asparagine 74, histidine 80, and aspartate 87. Histidine 100 (proton donor) is an active-site residue. Substrate-binding positions include 101 to 102 (LS) and arginine 111.

Belongs to the type-II 3-dehydroquinase family. Homododecamer.

The catalysed reaction is 3-dehydroquinate = 3-dehydroshikimate + H2O. Its pathway is metabolic intermediate biosynthesis; chorismate biosynthesis; chorismate from D-erythrose 4-phosphate and phosphoenolpyruvate: step 3/7. In terms of biological role, catalyzes a trans-dehydration via an enolate intermediate. This chain is 3-dehydroquinate dehydratase, found in Clostridium botulinum (strain Langeland / NCTC 10281 / Type F).